Reading from the N-terminus, the 220-residue chain is Deoxyribose-phosphate aldolase (220 aa).

Catalysis depends on Asp-89, which acts as the Proton donor/acceptor. Residue Lys-152 is the Schiff-base intermediate with acetaldehyde of the active site. The active-site Proton donor/acceptor is the Lys-181.

The protein belongs to the DeoC/FbaB aldolase family. DeoC type 1 subfamily.

Its subcellular location is the cytoplasm. It carries out the reaction 2-deoxy-D-ribose 5-phosphate = D-glyceraldehyde 3-phosphate + acetaldehyde. It functions in the pathway carbohydrate degradation; 2-deoxy-D-ribose 1-phosphate degradation; D-glyceraldehyde 3-phosphate and acetaldehyde from 2-deoxy-alpha-D-ribose 1-phosphate: step 2/2. Its function is as follows. Catalyzes a reversible aldol reaction between acetaldehyde and D-glyceraldehyde 3-phosphate to generate 2-deoxy-D-ribose 5-phosphate. In Enterococcus faecalis (strain ATCC 700802 / V583), this protein is Deoxyribose-phosphate aldolase.